The primary structure comprises 185 residues: Protein GrpE (185 aa).

Residues Met-1–Gln-44 form a disordered region.

This sequence belongs to the GrpE family. As to quaternary structure, homodimer.

Its subcellular location is the cytoplasm. Its function is as follows. Participates actively in the response to hyperosmotic and heat shock by preventing the aggregation of stress-denatured proteins, in association with DnaK and GrpE. It is the nucleotide exchange factor for DnaK and may function as a thermosensor. Unfolded proteins bind initially to DnaJ; upon interaction with the DnaJ-bound protein, DnaK hydrolyzes its bound ATP, resulting in the formation of a stable complex. GrpE releases ADP from DnaK; ATP binding to DnaK triggers the release of the substrate protein, thus completing the reaction cycle. Several rounds of ATP-dependent interactions between DnaJ, DnaK and GrpE are required for fully efficient folding. In Methylococcus capsulatus (strain ATCC 33009 / NCIMB 11132 / Bath), this protein is Protein GrpE.